We begin with the raw amino-acid sequence, 213 residues long: Protein RCR1 (213 aa).

Topologically, residues 1–39 (MGLISYENEAINEVKKADNHHVSKFVTSYYGPSSSSWQS) are lumenal. A helical membrane pass occupies residues 40 to 62 (GIWILFVLFVAAVILIILFTFVA). Topologically, residues 63-213 (NRRRRRMGRA…PERAKVNARS (151 aa)) are cytoplasmic. The PY motif motif lies at 104 to 107 (VPEY). The interval 190 to 213 (ERLPGGTTTQEINPPERAKVNARS) is disordered. Over residues 203–213 (PPERAKVNARS) the composition is skewed to basic and acidic residues.

Interacts with PMT4 and WW domain of RSP5.

Its subcellular location is the endoplasmic reticulum membrane. In terms of biological role, regulates chitin deposition in the cell wall. This Saccharomyces cerevisiae (strain ATCC 204508 / S288c) (Baker's yeast) protein is Protein RCR1 (RCR1).